A 321-amino-acid chain; its full sequence is DNA-directed RNA polymerase subunit alpha (321 aa).

The segment at 1–235 (MAYQIECLET…DLFSPLKEVP (235 aa)) is alpha N-terminal domain (alpha-NTD). Positions 252–321 (QIPIEQLNLS…TLPPQKAARN (70 aa)) are alpha C-terminal domain (alpha-CTD).

It belongs to the RNA polymerase alpha chain family. As to quaternary structure, homodimer. In cyanobacteria the RNAP catalytic core is composed of 2 alpha, 1 beta, 1 beta', 1 gamma and 1 omega subunit. When a sigma factor is associated with the core the holoenzyme is formed, which can initiate transcription.

It carries out the reaction RNA(n) + a ribonucleoside 5'-triphosphate = RNA(n+1) + diphosphate. Its function is as follows. DNA-dependent RNA polymerase catalyzes the transcription of DNA into RNA using the four ribonucleoside triphosphates as substrates. The chain is DNA-directed RNA polymerase subunit alpha from Thermosynechococcus vestitus (strain NIES-2133 / IAM M-273 / BP-1).